A 275-amino-acid polypeptide reads, in one-letter code: NH(3)-dependent NAD(+) synthetase (275 aa).

50–57 contacts ATP; that stretch reads GISGGVDS. Asp-56 serves as a coordination point for Mg(2+). Arg-147 contributes to the deamido-NAD(+) binding site. Thr-167 serves as a coordination point for ATP. Mg(2+) is bound at residue Glu-172. Deamido-NAD(+) is bound by residues Lys-180 and Asp-187. ATP-binding residues include Lys-196 and Thr-218. 267–268 contributes to the deamido-NAD(+) binding site; it reads HK.

This sequence belongs to the NAD synthetase family. Homodimer.

It carries out the reaction deamido-NAD(+) + NH4(+) + ATP = AMP + diphosphate + NAD(+) + H(+). Its pathway is cofactor biosynthesis; NAD(+) biosynthesis; NAD(+) from deamido-NAD(+) (ammonia route): step 1/1. In terms of biological role, catalyzes the ATP-dependent amidation of deamido-NAD to form NAD. Uses ammonia as a nitrogen source. The chain is NH(3)-dependent NAD(+) synthetase from Pseudomonas putida (strain ATCC 47054 / DSM 6125 / CFBP 8728 / NCIMB 11950 / KT2440).